The following is a 366-amino-acid chain: Chorismate synthase (366 aa).

The NADP(+) site is built by Arg48 and Arg54. FMN-binding positions include 125-127 (RSS), 238-239 (NA), Gly278, 293-297 (KPTSS), and Arg319.

The protein belongs to the chorismate synthase family. In terms of assembly, homotetramer. Requires FMNH2 as cofactor.

It carries out the reaction 5-O-(1-carboxyvinyl)-3-phosphoshikimate = chorismate + phosphate. It participates in metabolic intermediate biosynthesis; chorismate biosynthesis; chorismate from D-erythrose 4-phosphate and phosphoenolpyruvate: step 7/7. Functionally, catalyzes the anti-1,4-elimination of the C-3 phosphate and the C-6 proR hydrogen from 5-enolpyruvylshikimate-3-phosphate (EPSP) to yield chorismate, which is the branch point compound that serves as the starting substrate for the three terminal pathways of aromatic amino acid biosynthesis. This reaction introduces a second double bond into the aromatic ring system. This chain is Chorismate synthase, found in Burkholderia ambifaria (strain ATCC BAA-244 / DSM 16087 / CCUG 44356 / LMG 19182 / AMMD) (Burkholderia cepacia (strain AMMD)).